Here is a 416-residue protein sequence, read N- to C-terminus: Coenzyme F420H(2) oxidase (416 aa).

Residues His87, Glu89, Asp91, His92, His155, Asp174, and His239 each coordinate Fe cation. In terms of domain architecture, Flavodoxin-like spans Ala266–Ala407. FMN is bound by residues Thr272 to Thr277, Thr324 to Asp327, and Ser359 to Gly364.

It in the N-terminal section; belongs to the zinc metallo-hydrolase group 3 family. Requires FMN as cofactor. It depends on Fe cation as a cofactor.

The catalysed reaction is 2 reduced coenzyme F420-(gamma-L-Glu)(n) + O2 = 2 oxidized coenzyme F420-(gamma-L-Glu)(n) + 2 H2O + 2 H(+). Its function is as follows. Catalyzes the oxidation of F420H(2) with O(2). May be involved in O(2) detoxification, reducing the intracellular O(2) concentration to a level allowing growth at the expense of methane formation. This is Coenzyme F420H(2) oxidase (fprA) from Methanocaldococcus jannaschii (strain ATCC 43067 / DSM 2661 / JAL-1 / JCM 10045 / NBRC 100440) (Methanococcus jannaschii).